Consider the following 619-residue polypeptide: MGSVHGWIAWGGGLHGSDVEESEGMKKVRKVLEKAFSRKLYDSEVERIRTFEKELCLDTRVMIPFIFHGDRVVALPTTRYQDVDKSEKKYVEGVVMQLRRLVWRLMVWMHVPGGSSWIESLINEVFEATVSRDSDPVSLYKGARRRSGIRLMDLVMEVFKQNVSMVSEFGQRLARSAEDRMQGIPGSLSPEERKKEEEMLWKIKEHGERLCTKERQEEMVRAQKIICDVCAYVWEKDEDRMSFIMEVYSRHLCLKIVMPYTDIEVPLISYIDHHKLVSTDEKYKSVDIMAEVFKQAFIEHKGIDDESINNAVREVRERKRLEEMREMEERKRREEERAKNEEELLRMVEREEREKREKREKREESKGRGKRGAGEAKEESKEEDGKEEEGVEAEEEESAEVPLVETAVGGARRKKSLKGKRKGDGHHYKIHSRVLRWKRSAEKIKRELDKGSEERWKNRSIEEIKEQKKVHDIVEVSELIKSKECDRFFFRTGKYMKGGSERWKMVANGILEEGGEKKVGKVEVGLFKGERGESVVYHLMFRPTETERAGMVGGSSFGKGDDVDEIKKEESSDMSGFRYPPGVRCEMTSNGNEFRIEYRNPKNTSEVLRTLTILRIPEI.

Residues 350-384 (REEREKREKREKREESKGRGKRGAGEAKEESKEED) are compositionally biased toward basic and acidic residues. A disordered region spans residues 350–428 (REEREKREKR…GKRKGDGHHY (79 aa)). The span at 385–399 (GKEEEGVEAEEEESA) shows a compositional bias: acidic residues. Basic residues predominate over residues 411–428 (ARRKKSLKGKRKGDGHHY).

The protein belongs to the UPF0329 family.

This Encephalitozoon cuniculi (strain GB-M1) (Microsporidian parasite) protein is UPF0329 protein ECU01_0100/ECU01_1510/ECU08_0030.